We begin with the raw amino-acid sequence, 105 residues long: Nitrogen fixation nifHD2 region GlnB-like protein 1 (105 aa).

This sequence belongs to the P(II) protein family.

In terms of biological role, could be involved in the regulation of nitrogen fixation. The sequence is that of Nitrogen fixation nifHD2 region GlnB-like protein 1 from Methanosarcina barkeri.